We begin with the raw amino-acid sequence, 198 residues long: FMN-dependent NADH:quinone oxidoreductase (198 aa).

FMN is bound by residues Ser10, 16–18 (SQS), 94–97 (MYNF), and 138–141 (TRGG).

The protein belongs to the azoreductase type 1 family. Homodimer. FMN is required as a cofactor.

The catalysed reaction is 2 a quinone + NADH + H(+) = 2 a 1,4-benzosemiquinone + NAD(+). It catalyses the reaction N,N-dimethyl-1,4-phenylenediamine + anthranilate + 2 NAD(+) = 2-(4-dimethylaminophenyl)diazenylbenzoate + 2 NADH + 2 H(+). Its function is as follows. Quinone reductase that provides resistance to thiol-specific stress caused by electrophilic quinones. Functionally, also exhibits azoreductase activity. Catalyzes the reductive cleavage of the azo bond in aromatic azo compounds to the corresponding amines. The sequence is that of FMN-dependent NADH:quinone oxidoreductase from Shewanella putrefaciens (strain CN-32 / ATCC BAA-453).